The sequence spans 401 residues: Argininosuccinate synthase (401 aa).

Residues 10–18 (AYSGGVDTS) and Ala-38 each bind ATP. L-citrulline is bound at residue Tyr-89. Gly-119 contributes to the ATP binding site. Positions 121, 125, and 126 each coordinate L-aspartate. Asn-125 provides a ligand contact to L-citrulline. The L-citrulline site is built by Arg-129, Ser-177, Ser-186, Glu-262, and Tyr-274.

The protein belongs to the argininosuccinate synthase family. Type 1 subfamily. Homotetramer.

It localises to the cytoplasm. The catalysed reaction is L-citrulline + L-aspartate + ATP = 2-(N(omega)-L-arginino)succinate + AMP + diphosphate + H(+). Its pathway is amino-acid biosynthesis; L-arginine biosynthesis; L-arginine from L-ornithine and carbamoyl phosphate: step 2/3. This Prochlorococcus marinus (strain MIT 9313) protein is Argininosuccinate synthase.